Here is a 312-residue protein sequence, read N- to C-terminus: Tetraacyldisaccharide 4'-kinase (312 aa).

Residue 60–67 coordinates ATP; that stretch reads IAGGSGKT.

Belongs to the LpxK family.

It catalyses the reaction a lipid A disaccharide + ATP = a lipid IVA + ADP + H(+). It functions in the pathway glycolipid biosynthesis; lipid IV(A) biosynthesis; lipid IV(A) from (3R)-3-hydroxytetradecanoyl-[acyl-carrier-protein] and UDP-N-acetyl-alpha-D-glucosamine: step 6/6. Functionally, transfers the gamma-phosphate of ATP to the 4'-position of a tetraacyldisaccharide 1-phosphate intermediate (termed DS-1-P) to form tetraacyldisaccharide 1,4'-bis-phosphate (lipid IVA). In Helicobacter pylori (strain ATCC 700392 / 26695) (Campylobacter pylori), this protein is Tetraacyldisaccharide 4'-kinase.